Reading from the N-terminus, the 286-residue chain is Phosducin-like protein 2 (286 aa).

S35 and S62 each carry phosphoserine. The interval F96–D286 is thioredoxin fold.

The protein belongs to the phosducin family. As to quaternary structure, interacts with the G protein beta-gamma subunit complex (STE4-STE18 complex). Interacts with CCT2; this interaction leads to inhibition of CCT complex mediated actin folding.

The protein resides in the cytoplasm. Its function is as follows. Essential for cell growth. Inhibits early G-protein signaling events following pheromone stimulation. Inhibits the folding activity of the chaperonin-containing T-complex (CCT) CCT2 which leads to inhibition of cytoskeletal actin folding. Plays a role in cell cycle progression in G1/S phase. The chain is Phosducin-like protein 2 from Saccharomyces cerevisiae (strain ATCC 204508 / S288c) (Baker's yeast).